The following is a 1027-amino-acid chain: LLGL scribble cell polarity complex component 2 (1027 aa).

WD repeat units lie at residues 36 to 69, 76 to 117, 132 to 169, 193 to 227, 233 to 268, 282 to 324, 332 to 366, 388 to 464, 508 to 583, and 592 to 653; these read SALG…FMGL, VLQI…EESF, VTEI…DRTI, ALQE…LSHF, LENA…NPEP, AITK…GQQT, VIDF…VIDL, TCSH…YKLS, QKIF…FVLV, and TSLA…LRQS. Position 653 is a phosphoserine (Ser-653). Positions 654-669 are enriched in basic residues; it reads FRRMRRSRVSSHKRRP. The disordered stretch occupies residues 654–678; sequence FRRMRRSRVSSHKRRPGGPTGEAQA. WD repeat units follow at residues 715 to 771, 780 to 832, 837 to 890, and 904 to 927; these read VRTL…KEIQ, GILV…VSAK, LTAL…VRYS, and VFTK…SLST. The disordered stretch occupies residues 940 to 981; sequence TKAKKHNRPSNGNGTGLKMTSSGHVRNSKSQSDGDEKKPGPV. Over residues 957 to 970 the composition is skewed to polar residues; the sequence is KMTSSGHVRNSKSQ. Ser-971 and Ser-1022 each carry phosphoserine.

It belongs to the WD repeat L(2)GL family. Interacts with GPSM2/LGN, PRKCI/aPKC and PARD6B/Par-6. The complex is enhanced during mitosis. Interacts with DCAF1. Post-translationally, phosphorylated at Ser-653 by PRKCI. Phosphorylation is enhanced during cell polarization induced by calcium. Phosphorylation may occur during the cell-cell contact-induced cell polarization and may contribute to the segregation of LLGL2 from the PRKCI/aPKC and PARD6B/Par-6 complex.

The protein resides in the cytoplasm. In terms of biological role, part of a complex with GPSM2/LGN, PRKCI/aPKC and PARD6B/Par-6, which may ensure the correct organization and orientation of bipolar spindles for normal cell division. This complex plays roles in the initial phase of the establishment of epithelial cell polarity. The polypeptide is LLGL scribble cell polarity complex component 2 (Llgl2) (Mus musculus (Mouse)).